We begin with the raw amino-acid sequence, 286 residues long: Bifunctional protein FolD (286 aa).

Residues 165 to 167 (GRS) and Ser-190 contribute to the NADP(+) site.

It belongs to the tetrahydrofolate dehydrogenase/cyclohydrolase family. As to quaternary structure, homodimer.

It catalyses the reaction (6R)-5,10-methylene-5,6,7,8-tetrahydrofolate + NADP(+) = (6R)-5,10-methenyltetrahydrofolate + NADPH. The enzyme catalyses (6R)-5,10-methenyltetrahydrofolate + H2O = (6R)-10-formyltetrahydrofolate + H(+). It functions in the pathway one-carbon metabolism; tetrahydrofolate interconversion. Functionally, catalyzes the oxidation of 5,10-methylenetetrahydrofolate to 5,10-methenyltetrahydrofolate and then the hydrolysis of 5,10-methenyltetrahydrofolate to 10-formyltetrahydrofolate. The protein is Bifunctional protein FolD of Paraburkholderia xenovorans (strain LB400).